Reading from the N-terminus, the 338-residue chain is LINE-1 retrotransposable element ORF1 protein (338 aa).

The disordered stretch occupies residues 1–40 (MGKKQNRKTGNSKTQSASPPPKERSSSPATEQSWMENDFD). Composition is skewed to polar residues over residues 8–17 (KTGNSKTQSA) and 26–35 (SSPATEQSWM). Residues 49–153 (RSNYSELRED…QSLQEIWDYV (105 aa)) are a coiled coil. The interval 157 to 252 (NLRLIGVPES…KGKPIRLTAD (96 aa)) is RNA recognition motif (RRM) domain. The interval 253–317 (LSAETLQARR…TTRPALKELL (65 aa)) is C-terminal domain (CTD).

The protein belongs to the transposase 22 family. Homotrimer (via coiled coil domain). May also form larger homooligomers. May interact with DDX39A, HNRNPA1, SERBP1 and YBX1. Interacts with TEX19 and UBR2. Interacts with MOV10. Interacts with APOBEC3D; this interaction inhibits LINE-1 retrotransposition. Post-translationally, polyubiquitinated, probably by UBR2, which induces its degradation.

The protein localises to the nucleus. It is found in the nucleolus. Its subcellular location is the cytoplasm. It localises to the cytoplasmic ribonucleoprotein granule. The protein resides in the stress granule. In terms of biological role, nucleic acid-binding protein which is essential for retrotransposition of LINE-1 elements in the genome. Functions as a nucleic acid chaperone binding its own transcript and therefore preferentially mobilizing the transcript from which they are encoded. The sequence is that of LINE-1 retrotransposable element ORF1 protein (L1RE1) from Homo sapiens (Human).